A 269-amino-acid polypeptide reads, in one-letter code: Glutamate racemase (269 aa).

Residues 11–12 and 43–44 contribute to the substrate site; these read DS and YG. Cysteine 74 (proton donor/acceptor) is an active-site residue. Substrate is bound at residue 75-76; it reads NT. The Proton donor/acceptor role is filled by cysteine 185. Position 186 to 187 (186 to 187) interacts with substrate; that stretch reads TH.

The protein belongs to the aspartate/glutamate racemases family.

The catalysed reaction is L-glutamate = D-glutamate. The protein operates within cell wall biogenesis; peptidoglycan biosynthesis. Its function is as follows. Provides the (R)-glutamate required for cell wall biosynthesis. This chain is Glutamate racemase, found in Bacillus cereus (strain ATCC 10987 / NRS 248).